Reading from the N-terminus, the 384-residue chain is 8-amino-7-oxononanoate synthase (384 aa).

Residue R21 coordinates substrate. A pyridoxal 5'-phosphate-binding site is contributed by 108–109 (GF). H133 is a binding site for substrate. Pyridoxal 5'-phosphate is bound by residues S179, H207, and T233. Residue K236 is modified to N6-(pyridoxal phosphate)lysine. Residue T352 participates in substrate binding.

This sequence belongs to the class-II pyridoxal-phosphate-dependent aminotransferase family. BioF subfamily. Homodimer. It depends on pyridoxal 5'-phosphate as a cofactor.

It carries out the reaction 6-carboxyhexanoyl-[ACP] + L-alanine + H(+) = (8S)-8-amino-7-oxononanoate + holo-[ACP] + CO2. The protein operates within cofactor biosynthesis; biotin biosynthesis. Its function is as follows. Catalyzes the decarboxylative condensation of pimeloyl-[acyl-carrier protein] and L-alanine to produce 8-amino-7-oxononanoate (AON), [acyl-carrier protein], and carbon dioxide. In Escherichia coli O6:K15:H31 (strain 536 / UPEC), this protein is 8-amino-7-oxononanoate synthase.